Consider the following 40-residue polypeptide: U2-myrmicitoxin-Tb1a (40 aa).

The signal sequence occupies residues A1–A3. The propeptide occupies M4 to A29. An Arginine amide modification is found at R39.

It belongs to the formicidae venom precursor-01 superfamily. As to expression, expressed by the venom gland.

The protein resides in the secreted. Its function is as follows. Venom protein with unknown function. Does not induce paralysis when a high dose is administered by intrathoracic injection into the blowfly Lucilia caesar. The polypeptide is U2-myrmicitoxin-Tb1a (Tetramorium bicarinatum (Tramp ant)).